Reading from the N-terminus, the 729-residue chain is Fatty acid oxidation complex subunit alpha (729 aa).

Positions 1-189 (MLYKGDTLYL…KIGLVDGVVK (189 aa)) are enoyl-CoA hydratase/isomerase. Residue aspartate 296 participates in substrate binding. Positions 311 to 729 (ETPKHAAVLG…ARPVGELKTA (419 aa)) are 3-hydroxyacyl-CoA dehydrogenase. NAD(+)-binding positions include methionine 324, aspartate 343, 400–402 (VVE), lysine 407, and serine 429. Histidine 450 acts as the For 3-hydroxyacyl-CoA dehydrogenase activity in catalysis. An NAD(+)-binding site is contributed by asparagine 453. Asparagine 500 and tyrosine 660 together coordinate substrate.

The protein in the N-terminal section; belongs to the enoyl-CoA hydratase/isomerase family. It in the C-terminal section; belongs to the 3-hydroxyacyl-CoA dehydrogenase family. As to quaternary structure, heterotetramer of two alpha chains (FadB) and two beta chains (FadA).

It catalyses the reaction a (3S)-3-hydroxyacyl-CoA + NAD(+) = a 3-oxoacyl-CoA + NADH + H(+). The catalysed reaction is a (3S)-3-hydroxyacyl-CoA = a (2E)-enoyl-CoA + H2O. It carries out the reaction a 4-saturated-(3S)-3-hydroxyacyl-CoA = a (3E)-enoyl-CoA + H2O. The enzyme catalyses (3S)-3-hydroxybutanoyl-CoA = (3R)-3-hydroxybutanoyl-CoA. It catalyses the reaction a (3Z)-enoyl-CoA = a 4-saturated (2E)-enoyl-CoA. The catalysed reaction is a (3E)-enoyl-CoA = a 4-saturated (2E)-enoyl-CoA. It participates in lipid metabolism; fatty acid beta-oxidation. In terms of biological role, involved in the aerobic and anaerobic degradation of long-chain fatty acids via beta-oxidation cycle. Catalyzes the formation of 3-oxoacyl-CoA from enoyl-CoA via L-3-hydroxyacyl-CoA. It can also use D-3-hydroxyacyl-CoA and cis-3-enoyl-CoA as substrate. The protein is Fatty acid oxidation complex subunit alpha of Enterobacter cloacae.